The sequence spans 396 residues: Putative nickel insertion protein (396 aa).

It belongs to the LarC family.

The polypeptide is Putative nickel insertion protein (Methanosarcina acetivorans (strain ATCC 35395 / DSM 2834 / JCM 12185 / C2A)).